A 202-amino-acid chain; its full sequence is UDP-N-acetylglucosamine transferase subunit ALG13 (202 aa).

Belongs to the glycosyltransferase 28 family. Heterodimer with ALG14 to form a functional enzyme.

The protein localises to the endoplasmic reticulum. The catalysed reaction is an N-acetyl-alpha-D-glucosaminyl-diphospho-di-trans,poly-cis-dolichol + UDP-N-acetyl-alpha-D-glucosamine = an N,N'-diacetylchitobiosyl-diphospho-di-trans,poly-cis-dolichol + UDP + H(+). In terms of biological role, involved in protein N-glycosylation. Essential for the second step of the dolichol-linked oligosaccharide pathway. The chain is UDP-N-acetylglucosamine transferase subunit ALG13 (ALG13) from Saccharomyces cerevisiae (strain ATCC 204508 / S288c) (Baker's yeast).